We begin with the raw amino-acid sequence, 449 residues long: Ktr system potassium uptake protein D (449 aa).

The next 10 helical transmembrane spans lie at 17–37 (LIAL…SLPA), 46–66 (TFID…LTVV), 75–95 (IGIF…MTLG), 133–153 (VLFL…TYFL), 194–214 (FVQF…PVLV), 235–255 (ITTI…FALE), 297–317 (LFFI…GGGI), 355–375 (LVVT…LTIT), 380–400 (LLEL…SLGI), and 411–431 (VIMI…YLIG).

This sequence belongs to the TrkH potassium transport family. Ktr (TC 2.A.38.4) subfamily. In terms of assembly, homodimer. Part of the KtrCD complex formed by an octameric catalytic ring of KtrC and a membrane associated dimer of KtrD forming a potassium channel.

The protein resides in the cell membrane. Functionally, integral membrane subunit of the KtrCD potassium uptake transporter. The 2 major potassium transporter complexes KtrAB and KtrCD confer resistance to both suddenly imposed and prolonged osmotic stress. The chain is Ktr system potassium uptake protein D (ktrD) from Bacillus subtilis (strain 168).